The primary structure comprises 124 residues: Prefoldin subunit beta (124 aa).

It belongs to the prefoldin subunit beta family. Heterohexamer of two alpha and four beta subunits.

It is found in the cytoplasm. Functionally, molecular chaperone capable of stabilizing a range of proteins. Seems to fulfill an ATP-independent, HSP70-like function in archaeal de novo protein folding. The chain is Prefoldin subunit beta from Pyrobaculum arsenaticum (strain DSM 13514 / JCM 11321 / PZ6).